A 198-amino-acid polypeptide reads, in one-letter code: Carnitine operon protein CaiE (198 aa).

Residues lysine 174 to glutamine 198 are disordered. The segment covering glutamate 180–glutamine 198 has biased composition (basic and acidic residues).

The protein belongs to the transferase hexapeptide repeat family.

It functions in the pathway amine and polyamine metabolism; carnitine metabolism. Overproduction of CaiE stimulates the activity of CaiB and CaiD. This Salmonella typhimurium (strain LT2 / SGSC1412 / ATCC 700720) protein is Carnitine operon protein CaiE.